An 89-amino-acid polypeptide reads, in one-letter code: Small ribosomal subunit protein uS15 (89 aa).

This sequence belongs to the universal ribosomal protein uS15 family. As to quaternary structure, part of the 30S ribosomal subunit. Forms a bridge to the 50S subunit in the 70S ribosome, contacting the 23S rRNA.

Functionally, one of the primary rRNA binding proteins, it binds directly to 16S rRNA where it helps nucleate assembly of the platform of the 30S subunit by binding and bridging several RNA helices of the 16S rRNA. Its function is as follows. Forms an intersubunit bridge (bridge B4) with the 23S rRNA of the 50S subunit in the ribosome. This is Small ribosomal subunit protein uS15 from Chromohalobacter salexigens (strain ATCC BAA-138 / DSM 3043 / CIP 106854 / NCIMB 13768 / 1H11).